The chain runs to 1077 residues: Adenylate cyclase type 4 (1077 aa).

Residues 1–28 (MARLFSPRPPPSEDLFYETYYSLSQQYP) are Cytoplasmic-facing. Transmembrane regions (helical) follow at residues 29–50 (LLILLLVIVLCALVALPAVAWA), 61–80 (FLTTVLCALGGFSLLLGLAS), 94–117 (GLIWVALLALGYGFLFTGGVVSAW), 120–138 (VSFFLFIIFTVYAMLPLGM), 141–162 (AAAAGVISSLSHLLVLGLYLGW), and 170–190 (LLPQLAANAVLFLCGNVVGAY). Topologically, residues 191 to 582 (HKALMERALR…YRLSALPAFK (392 aa)) are cytoplasmic. Aspartate 278, isoleucine 279, and aspartate 322 together coordinate Mg(2+). Residues 278 to 283 (DIVGFT), 320 to 322 (LGD), and arginine 366 contribute to the ATP site. Positions 503-524 (TSTPLPEKAFSPQWSLDRSRTP) are disordered. Serine 517 bears the Phosphoserine mark. Threonine 533 is subject to Phosphothreonine. 3 helical membrane-spanning segments follow: residues 583–604 (YYAACTFLVFLSNFTIQMLVTT), 608–630 (ALIITYSITFLLFFLLLFVCFSE), and 661–684 (VALGTATILLVFTMAIASLLFLPV). At 685–717 (SSDCLFLASNVSSVTFNASWEMPGSLPLISIPL) the chain is on the extracellular side. N-linked (GlcNAc...) asparagine glycosylation is found at asparagine 694 and asparagine 701. A run of 3 helical transmembrane segments spans residues 718 to 738 (ISIPYSMHCCVLGFLSCSLFL), 746 to 766 (LLLLLLWLVASCSLFLHSHAW), and 793 to 809 (MGAIYFFIFFFTLLVLA). The Cytoplasmic segment spans residues 810–1077 (RQNEYYCRLD…LTRTGSPSAS (268 aa)). ATP contacts are provided by residues lysine 927, 1007–1009 (DIW), 1014–1018 (NVASR), and lysine 1054.

Belongs to the adenylyl cyclase class-4/guanylyl cyclase family. Mg(2+) is required as a cofactor. It depends on Mn(2+) as a cofactor.

Its subcellular location is the cell membrane. The protein localises to the cytoplasm. The catalysed reaction is ATP = 3',5'-cyclic AMP + diphosphate. Its activity is regulated as follows. Activated by forskolin. Insensitive to calcium/calmodulin. Stimulated by GNAS and by the G-protein beta and gamma subunit complex. Its function is as follows. Catalyzes the formation of the signaling molecule cAMP in response to G-protein signaling. This chain is Adenylate cyclase type 4 (Adcy4), found in Mus musculus (Mouse).